The primary structure comprises 505 residues: Protein disulfide-isomerase A3 (505 aa).

The N-terminal stretch at 1–24 (MRFSCLALLPGVALLLASALLASA) is a signal peptide. Residues 25–133 (SDVLELTDEN…IVSHLKKQAG (109 aa)) enclose the Thioredoxin 1 domain. Active-site nucleophile residues include cysteine 57 and cysteine 60. A disulfide bridge connects residues cysteine 57 and cysteine 60. An N6-methyllysine modification is found at lysine 61. The cysteines at positions 85 and 92 are disulfide-linked. Position 129 is an N6-succinyllysine (lysine 129). N6-acetyllysine is present on lysine 152. Position 218 is an N6-succinyllysine (lysine 218). Position 252 is an N6-acetyllysine (lysine 252). The residue at position 319 (threonine 319) is a Phosphothreonine. The Thioredoxin 2 domain maps to 343–485 (SRDGKALERF…FISYLQREAT (143 aa)). At lysine 362 the chain carries N6-acetyllysine. Residues cysteine 406 and cysteine 409 each act as nucleophile in the active site. Cysteine 406 and cysteine 409 are oxidised to a cystine. The interval 484–505 (ATNPPIIQEEKPKKKKKAQEDL) is disordered. Basic and acidic residues predominate over residues 491–505 (QEEKPKKKKKAQEDL). Lysine 494 is modified (N6-acetyllysine). Positions 502–505 (QEDL) match the Prevents secretion from ER motif.

The protein belongs to the protein disulfide isomerase family. Part of the major histocompatibility complex class I (MHC I) peptide loading complex composed of TAP1, TAP2, B2M, MHC heavy chain, TAPBP, PDIA3, and CALR. Interacts with ERP27 and CANX. Interacts with SERPINA2 and with SERPINA1. Interacts with ATP2A2. In terms of processing, within the major histocompatibility complex class I (MHC I) peptide loading complex forms reversible disulfide-linked heterodimers with TAPBP as part of its protein folding chaperone activity. This is essential to assist the dynamic assembly of the MHC I complex with high affinity antigens in the endoplasmic reticulum. Phosphorylated. As to expression, in caput epididymal spermatozoa, detected in the head, mid and principal pieces. In cauda epididymal spermatozoa detected only in the acrosome (at protein level).

It localises to the endoplasmic reticulum. The protein resides in the endoplasmic reticulum lumen. Its subcellular location is the melanosome. The catalysed reaction is Catalyzes the rearrangement of -S-S- bonds in proteins.. Seems to be inhibited by acidic phospholipids. Functionally, protein disulfide isomerase that catalyzes the formation, isomerization, and reduction or oxidation of disulfide bonds in client proteins and functions as a protein folding chaperone. Core component of the major histocompatibility complex class I (MHC I) peptide loading complex where it functions as an essential folding chaperone for TAPBP. Through TAPBP, assists the dynamic assembly of the MHC I complex with high affinity antigens in the endoplasmic reticulum. Therefore, plays a crucial role in the presentation of antigens to cytotoxic T cells in adaptive immunity. This Rattus norvegicus (Rat) protein is Protein disulfide-isomerase A3 (Pdia3).